The chain runs to 867 residues: E3 ubiquitin-protein ligase SH3RF1 (867 aa).

The segment at 12–53 adopts an RING-type zinc-finger fold; that stretch reads CPVCLERLDATAKVLPCQHTFCRRCLLGIVGSRGELRCPECR. Residues 101-127 are disordered; it reads AQGAGGSQRDPGPTGGQSQRVQAKSTP. Polar residues predominate over residues 116-125; it reads GQSQRVQAKS. SH3 domains are found at residues 132-191 and 194-257; these read PQLP…VIKP and QPPP…FNSA. A disordered region spans residues 265–328; that stretch reads DKPSEGGGDS…PPPQRHSMEI (64 aa). Positions 275–285 are enriched in low complexity; sequence SEGPSSSSSGP. Residues 436 to 497 enclose the SH3 3 domain; sequence QRPTVYVAMF…PGNYMSPVSR (62 aa). A disordered region spans residues 706-794; that stretch reads LSNKKKLRPS…APIAPPPRQP (89 aa). Low complexity predominate over residues 760–769; sequence SELSMSSSSS. The segment covering 770–784 has biased composition (polar residues); that stretch reads NTDAVTHRSSPQDNT. An SH3 4 domain is found at 808–867; sequence IVCERYRVVVSYPPQSEAELELKEGDIVFVHKKREDGWFKGTLQRNGRTGLFPGSFVDSI.

Belongs to the SH3RF family. In terms of processing, autoubiquitinated. Ubiquitinated by SH3RF2, leading to proteasome-mediated degradation.

The protein localises to the cytoplasm. The protein resides in the perinuclear region. Its subcellular location is the cell projection. It localises to the lamellipodium. It is found in the golgi apparatus. The protein localises to the trans-Golgi network. The enzyme catalyses S-ubiquitinyl-[E2 ubiquitin-conjugating enzyme]-L-cysteine + [acceptor protein]-L-lysine = [E2 ubiquitin-conjugating enzyme]-L-cysteine + N(6)-ubiquitinyl-[acceptor protein]-L-lysine.. The protein operates within protein modification; protein ubiquitination. In terms of biological role, has E3 ubiquitin-protein ligase activity. In the absence of an external substrate, it can catalyze self-ubiquitination. Acts as a scaffold protein that contributes to the effective activation of the JNK signaling pathway. This is E3 ubiquitin-protein ligase SH3RF1 (sh3rf1) from Danio rerio (Zebrafish).